Here is a 371-residue protein sequence, read N- to C-terminus: Cytochrome b (371 aa).

4 consecutive transmembrane segments (helical) span residues 25–45 (FGSM…FLAV), 69–90 (WMMQ…YIHI), 105–125 (WLSG…XXXX), and 170–190 (XXXX…LHIM). Heme b contacts are provided by H75 and H89. Heme b is bound by residues X174 and H188. H193 is a binding site for a ubiquinone. Transmembrane regions (helical) follow at residues 218–238 (YKDL…VSFL), 280–300 (LGGA…PFTH), 312–332 (IMQL…WAAT), and 339–358 (FTMI…ITNP).

This sequence belongs to the cytochrome b family. In terms of assembly, the cytochrome bc1 complex contains 3 respiratory subunits (MT-CYB, CYC1 and UQCRFS1), 2 core proteins (UQCRC1 and UQCRC2) and probably 6 low-molecular weight proteins. Heme b serves as cofactor.

Its subcellular location is the mitochondrion inner membrane. In terms of biological role, component of the ubiquinol-cytochrome c reductase complex (complex III or cytochrome b-c1 complex) that is part of the mitochondrial respiratory chain. The b-c1 complex mediates electron transfer from ubiquinol to cytochrome c. Contributes to the generation of a proton gradient across the mitochondrial membrane that is then used for ATP synthesis. The polypeptide is Cytochrome b (MT-CYB) (Eryx jaculus (Javelin sand boa)).